A 1171-amino-acid chain; its full sequence is ATP-dependent helicase/deoxyribonuclease subunit B (1171 aa).

In terms of domain architecture, UvrD-like helicase ATP-binding spans 1–287 (MSLRFVIGRA…IPLMEQPRFH (287 aa)). ATP is bound at residue 8 to 15 (GRAGSGKS). One can recognise a UvrD-like helicase C-terminal domain in the interval 281 to 587 (MEQPRFHSPA…QFANIPPSLD (307 aa)). C805, C1129, C1132, and C1138 together coordinate [4Fe-4S] cluster.

This sequence belongs to the helicase family. AddB/RexB type 1 subfamily. Heterodimer of AddA and AddB. The cofactor is Mg(2+). Requires [4Fe-4S] cluster as cofactor.

Functionally, the heterodimer acts as both an ATP-dependent DNA helicase and an ATP-dependent, dual-direction single-stranded exonuclease. Recognizes the chi site generating a DNA molecule suitable for the initiation of homologous recombination. The AddB subunit has 5' -&gt; 3' nuclease activity but not helicase activity. This Bacillus cereus (strain G9842) protein is ATP-dependent helicase/deoxyribonuclease subunit B.